Reading from the N-terminus, the 199-residue chain is Crossover junction endodeoxyribonuclease RuvC (199 aa).

Residues aspartate 7, glutamate 68, and aspartate 141 contribute to the active site. 3 residues coordinate Mg(2+): aspartate 7, glutamate 68, and aspartate 141.

It belongs to the RuvC family. Homodimer which binds Holliday junction (HJ) DNA. The HJ becomes 2-fold symmetrical on binding to RuvC with unstacked arms; it has a different conformation from HJ DNA in complex with RuvA. In the full resolvosome a probable DNA-RuvA(4)-RuvB(12)-RuvC(2) complex forms which resolves the HJ. Requires Mg(2+) as cofactor.

It is found in the cytoplasm. The catalysed reaction is Endonucleolytic cleavage at a junction such as a reciprocal single-stranded crossover between two homologous DNA duplexes (Holliday junction).. Its function is as follows. The RuvA-RuvB-RuvC complex processes Holliday junction (HJ) DNA during genetic recombination and DNA repair. Endonuclease that resolves HJ intermediates. Cleaves cruciform DNA by making single-stranded nicks across the HJ at symmetrical positions within the homologous arms, yielding a 5'-phosphate and a 3'-hydroxyl group; requires a central core of homology in the junction. The consensus cleavage sequence is 5'-(A/T)TT(C/G)-3'. Cleavage occurs on the 3'-side of the TT dinucleotide at the point of strand exchange. HJ branch migration catalyzed by RuvA-RuvB allows RuvC to scan DNA until it finds its consensus sequence, where it cleaves and resolves the cruciform DNA. The chain is Crossover junction endodeoxyribonuclease RuvC from Saccharopolyspora erythraea (strain ATCC 11635 / DSM 40517 / JCM 4748 / NBRC 13426 / NCIMB 8594 / NRRL 2338).